Reading from the N-terminus, the 87-residue chain is MANIKSAKKRAVQSEKARKHNASRRSMMRTFIKKVYAAIEAGDKAAAQNAFNEMQPIVDRQAAKGLIHKNKAARHKANLTAQISKLA.

The interval 1–26 is disordered; it reads MANIKSAKKRAVQSEKARKHNASRRS.

Belongs to the bacterial ribosomal protein bS20 family.

In terms of biological role, binds directly to 16S ribosomal RNA. The protein is Small ribosomal subunit protein bS20 of Enterobacter sp. (strain 638).